The following is a 279-amino-acid chain: Large ribosomal subunit protein uL2 (279 aa).

Positions Met-223–Lys-279 are disordered. A compositionally biased stretch (gly residues) spans Met-232–Gly-242. Basic residues predominate over residues Leu-259–Lys-279.

This sequence belongs to the universal ribosomal protein uL2 family. As to quaternary structure, part of the 50S ribosomal subunit. Forms a bridge to the 30S subunit in the 70S ribosome.

Functionally, one of the primary rRNA binding proteins. Required for association of the 30S and 50S subunits to form the 70S ribosome, for tRNA binding and peptide bond formation. It has been suggested to have peptidyltransferase activity; this is somewhat controversial. Makes several contacts with the 16S rRNA in the 70S ribosome. This Chlorobaculum tepidum (strain ATCC 49652 / DSM 12025 / NBRC 103806 / TLS) (Chlorobium tepidum) protein is Large ribosomal subunit protein uL2.